Reading from the N-terminus, the 445-residue chain is Bifunctional protein GlmU (445 aa).

Residues 1 to 218 (MRALVLAAGK…LLEITGVNTR (218 aa)) form a pyrophosphorylase region. Residues 6–9 (LAAG), Lys-20, Gln-69, 74–75 (GT), 96–98 (YGD), Gly-134, Glu-147, Asn-162, and Asn-216 contribute to the UDP-N-acetyl-alpha-D-glucosamine site. Asp-98 lines the Mg(2+) pocket. Asn-216 is a binding site for Mg(2+). Residues 219–239 (KTLVWLEEQLRMRKIEELLEN) are linker. The tract at residues 240 to 445 (GVTILDPATT…GWVLKKRKEE (206 aa)) is N-acetyltransferase. UDP-N-acetyl-alpha-D-glucosamine contacts are provided by Arg-321 and Lys-339. His-351 (proton acceptor) is an active-site residue. Positions 354 and 365 each coordinate UDP-N-acetyl-alpha-D-glucosamine. Acetyl-CoA-binding positions include Ala-368, 374–375 (NY), Ser-393, Ala-411, and Arg-428.

In the N-terminal section; belongs to the N-acetylglucosamine-1-phosphate uridyltransferase family. It in the C-terminal section; belongs to the transferase hexapeptide repeat family. Homotrimer. Mg(2+) serves as cofactor.

The protein resides in the cytoplasm. It catalyses the reaction alpha-D-glucosamine 1-phosphate + acetyl-CoA = N-acetyl-alpha-D-glucosamine 1-phosphate + CoA + H(+). The catalysed reaction is N-acetyl-alpha-D-glucosamine 1-phosphate + UTP + H(+) = UDP-N-acetyl-alpha-D-glucosamine + diphosphate. The protein operates within nucleotide-sugar biosynthesis; UDP-N-acetyl-alpha-D-glucosamine biosynthesis; N-acetyl-alpha-D-glucosamine 1-phosphate from alpha-D-glucosamine 6-phosphate (route II): step 2/2. Its pathway is nucleotide-sugar biosynthesis; UDP-N-acetyl-alpha-D-glucosamine biosynthesis; UDP-N-acetyl-alpha-D-glucosamine from N-acetyl-alpha-D-glucosamine 1-phosphate: step 1/1. It functions in the pathway bacterial outer membrane biogenesis; LPS lipid A biosynthesis. Catalyzes the last two sequential reactions in the de novo biosynthetic pathway for UDP-N-acetylglucosamine (UDP-GlcNAc). The C-terminal domain catalyzes the transfer of acetyl group from acetyl coenzyme A to glucosamine-1-phosphate (GlcN-1-P) to produce N-acetylglucosamine-1-phosphate (GlcNAc-1-P), which is converted into UDP-GlcNAc by the transfer of uridine 5-monophosphate (from uridine 5-triphosphate), a reaction catalyzed by the N-terminal domain. This Thermotoga sp. (strain RQ2) protein is Bifunctional protein GlmU.